Consider the following 505-residue polypeptide: Probable cytochrome P450 28a5 (505 aa).

Cys-450 provides a ligand contact to heme.

The protein belongs to the cytochrome P450 family. Requires heme as cofactor.

Its subcellular location is the endoplasmic reticulum membrane. It is found in the microsome membrane. May be involved in the metabolism of insect hormones and in the breakdown of synthetic insecticides. The protein is Probable cytochrome P450 28a5 (Cyp28a5) of Drosophila melanogaster (Fruit fly).